A 177-amino-acid polypeptide reads, in one-letter code: Large ribosomal subunit protein uL6 (177 aa).

Belongs to the universal ribosomal protein uL6 family. As to quaternary structure, part of the 50S ribosomal subunit.

Functionally, this protein binds to the 23S rRNA, and is important in its secondary structure. It is located near the subunit interface in the base of the L7/L12 stalk, and near the tRNA binding site of the peptidyltransferase center. The protein is Large ribosomal subunit protein uL6 of Polynucleobacter necessarius subsp. necessarius (strain STIR1).